Reading from the N-terminus, the 278-residue chain is MDYILIGVILGIVQGISEWIPISSKTQVLIVSLSLLGLSFSVAYSFGLFMEIGTIAAAIIYFRREISGLLKALVRMSSRREDYLLLKFLVIVTIITGLMGVPLYLFVISLPILGLPMTVLGVVLLIDGIIIYLSRKNYIPRKGLHDLRLRDIIIVGIAQGLAALPGVSRSGITTSALILLGVKPEEAFKLSFISLIPAALGAIGVTVLFSKHEVSQAVHSVSLSGLLISIVVATFVSIFFINALLRFARTNKVVVLVIILGIIAIISGILSGIAKGFY.

The next 8 membrane-spanning stretches (helical) occupy residues tyrosine 3–serine 23, valine 42–phenylalanine 62, phenylalanine 88–isoleucine 108, isoleucine 112–tyrosine 132, isoleucine 152–isoleucine 172, leucine 190–serine 210, glycine 225–leucine 245, and valine 253–isoleucine 273.

It belongs to the UppP family.

It is found in the cell membrane. It catalyses the reaction di-trans,octa-cis-undecaprenyl diphosphate + H2O = di-trans,octa-cis-undecaprenyl phosphate + phosphate + H(+). Functionally, catalyzes the dephosphorylation of undecaprenyl diphosphate (UPP). This Saccharolobus islandicus (strain M.16.4 / Kamchatka #3) (Sulfolobus islandicus) protein is Undecaprenyl-diphosphatase.